Reading from the N-terminus, the 456-residue chain is Cysteine--tRNA ligase (456 aa).

Residue C28 coordinates Zn(2+). A 'HIGH' region motif is present at residues 30–40 (MTVYDYCHLGH). C209, H234, and E238 together coordinate Zn(2+). The 'KMSKS' region motif lies at 266 to 270 (KMSKS). K269 is an ATP binding site.

The protein belongs to the class-I aminoacyl-tRNA synthetase family. As to quaternary structure, monomer. Requires Zn(2+) as cofactor.

It is found in the cytoplasm. It catalyses the reaction tRNA(Cys) + L-cysteine + ATP = L-cysteinyl-tRNA(Cys) + AMP + diphosphate. The sequence is that of Cysteine--tRNA ligase from Dechloromonas aromatica (strain RCB).